We begin with the raw amino-acid sequence, 494 residues long: Neuronal acetylcholine receptor subunit alpha-6 (494 aa).

A signal peptide spans 1–25 (MLTSKGQGFLHGGLCLWLCVFTPFF). Residues 26–239 (KGCVGCATEE…ITYSFYIRRL (214 aa)) lie on the Extracellular side of the membrane. Residues N54 and N171 are each glycosylated (N-linked (GlcNAc...) asparagine). 2 cysteine pairs are disulfide-bonded: C158/C172 and C222/C223. Helical transmembrane passes span 240 to 264 (PMFY…VFYL), 272 to 290 (VTLC…LVIT), and 306 to 327 (YLLF…VLNI). Topologically, residues 328–465 (HYRTPTTHTM…WKYVAMVVDR (138 aa)) are cytoplasmic. S401 bears the Phosphoserine mark. Residues 466-484 (VFLWVFIIVCVFGTAGLFL) traverse the membrane as a helical segment.

Belongs to the ligand-gated ion channel (TC 1.A.9) family. Acetylcholine receptor (TC 1.A.9.1) subfamily. Alpha-6/CHRNA6 sub-subfamily. In terms of assembly, neuronal AChR is composed of two different types of subunits: alpha and non-alpha (beta). CHRNA6/alpha-6 subunit can be combined to CHRNB2/beta-2, CHRNA4/alpha-4 and CHRNB3/beta-3 to give rise to functional receptors. Heteropentamers containing CHRNB3 have an stoichiometry of (CHRNA6:CHRNB2)2:CHRNB3. Interacts with LYPD6.

It localises to the synaptic cell membrane. The enzyme catalyses Ca(2+)(in) = Ca(2+)(out). The catalysed reaction is K(+)(in) = K(+)(out). It carries out the reaction Na(+)(in) = Na(+)(out). Its activity is regulated as follows. Activated by a myriad of ligands such as acetylcholine, cytisine and nicotine. CHRNA6 nAChR activity is inhibited by the antagonists alpha-conotoxin MII and PIA, a small disulfide-constrained peptides from cone snails. In terms of biological role, component of neuronal acetylcholine receptors (nAChRs) that function as pentameric, ligand-gated cation channels with high calcium permeability among other activities. nAChRs are excitatory neurotrasnmitter receptors formed by a collection of nAChR subunits known to mediate synaptic transmission in the nervous system and the neuromuscular junction. Each nAchR subunit confers differential attributes to channel properties, including activation, deactivation and desensitization kinetics, pH sensitivity, cation permeability, and binding to allosteric modulators. CHRNA6 forms pentameric channels with CHRNB2, CHRNB3 and CHRNA4 that exhibit high sensitivity to ACh and nicotine and are predominantly expressed in only a few brain areas, including dopaminergic neurons, norepirephrine neurons and cells of the visual system. nAChrs containing CHRNA6 subunits mediate endogenous cholinergic modulation of dopamine and gamma-aminobutyric acid (GABA) release in response to nicotine at nerve terminals. The polypeptide is Neuronal acetylcholine receptor subunit alpha-6 (CHRNA6) (Pan troglodytes (Chimpanzee)).